Reading from the N-terminus, the 822-residue chain is Putative endoplasmic reticulum metallopeptidase 1 (822 aa).

Residues 1 to 14 lie on the Cytoplasmic side of the membrane; it reads MVLVCASSSKCKRN. The helical transmembrane segment at 15-35 threads the bilayer; the sequence is TFLQLAMVLFAVVMARIALYF. Residues 36 to 365 are Lumenal-facing; that stretch reads HNHLDEPLVD…FNSLFFMYSK (330 aa). A glycan (N-linked (GlcNAc...) asparagine) is linked at N146. The Zn(2+) site is built by H161 and D173. E207 acts as the Proton acceptor in catalysis. The Zn(2+) site is built by E208 and E234. A glycan (N-linked (GlcNAc...) asparagine) is linked at N291. H307 provides a ligand contact to Zn(2+). Residues 366-384 form a helical membrane-spanning segment; sequence LTSKILNTLVGGLGILLTL. The Cytoplasmic portion of the chain corresponds to 385 to 392; that stretch reads RGSEGSFT. Residues 393-413 form a helical membrane-spanning segment; it reads VALIAQVISIAGIFVIPNIWA. The Lumenal segment spans residues 414–431; that stretch reads YILGNVLDCGMSWFRNEY. Residues 432–452 form a helical membrane-spanning segment; the sequence is WPLFIYLPAIFASLFFTESLF. Residues 453-463 are Cytoplasmic-facing; it reads KRSEHLALRAT. Residues 464–484 traverse the membrane as a helical segment; the sequence is IFIFSLLTFIPLPSAYLFTII. Residue D485 is a topological domain, lumenal. A helical membrane pass occupies residues 486-506; that stretch reads FFMVFALFLNDKILAKPGTVH. Residues 507–514 lie on the Cytoplasmic side of the membrane; sequence PLTYFIGS. Residues 515 to 535 traverse the membrane as a helical segment; it reads IGAMTVGFESAINLLEIFVPL. At 536–547 the chain is on the lumenal side; it reads TGRIGTDKVADN. Residues 548 to 568 traverse the membrane as a helical segment; the sequence is VVATVCVCGFNIYFPLMSPWI. At 569–575 the chain is on the cytoplasmic side; that stretch reads QRFRSRC. The helical transmembrane segment at 576 to 596 threads the bilayer; the sequence is CFRLGLLFSIFVVGFSSFILA. Topologically, residues 597–822 are lumenal; that stretch reads KQDTYYDSLH…GVVSGNFKLE (226 aa). 4 N-linked (GlcNAc...) asparagine glycosylation sites follow: N617, N682, N706, and N758.

It belongs to the peptidase M28 family. M28B subfamily. The cofactor is Zn(2+).

Its subcellular location is the endoplasmic reticulum membrane. In Schizosaccharomyces pombe (strain 972 / ATCC 24843) (Fission yeast), this protein is Putative endoplasmic reticulum metallopeptidase 1.